Consider the following 620-residue polypeptide: 1-deoxy-D-xylulose-5-phosphate synthase (620 aa).

Thiamine diphosphate is bound by residues H80 and 121-123 (GHS). D152 contacts Mg(2+). Thiamine diphosphate contacts are provided by residues 153-154 (GA), N181, Y288, and E370. A Mg(2+)-binding site is contributed by N181.

This sequence belongs to the transketolase family. DXPS subfamily. In terms of assembly, homodimer. Requires Mg(2+) as cofactor. Thiamine diphosphate serves as cofactor.

It catalyses the reaction D-glyceraldehyde 3-phosphate + pyruvate + H(+) = 1-deoxy-D-xylulose 5-phosphate + CO2. It functions in the pathway metabolic intermediate biosynthesis; 1-deoxy-D-xylulose 5-phosphate biosynthesis; 1-deoxy-D-xylulose 5-phosphate from D-glyceraldehyde 3-phosphate and pyruvate: step 1/1. Its function is as follows. Catalyzes the acyloin condensation reaction between C atoms 2 and 3 of pyruvate and glyceraldehyde 3-phosphate to yield 1-deoxy-D-xylulose-5-phosphate (DXP). This chain is 1-deoxy-D-xylulose-5-phosphate synthase, found in Escherichia coli (strain K12 / MC4100 / BW2952).